A 331-amino-acid chain; its full sequence is Mycothiol acetyltransferase (331 aa).

E33 lines the 1D-myo-inositol 2-(L-cysteinylamino)-2-deoxy-alpha-D-glucopyranoside pocket. A compositionally biased stretch (low complexity) spans H59 to A86. The tract at residues H59–A89 is disordered. R115 to S120 serves as a coordination point for acetyl-CoA. Residues L183–G331 enclose the N-acetyltransferase domain. 1D-myo-inositol 2-(L-cysteinylamino)-2-deoxy-alpha-D-glucopyranoside is bound by residues E210, K249, and E261. An acetyl-CoA-binding site is contributed by V265–T267. Y299 serves as a coordination point for 1D-myo-inositol 2-(L-cysteinylamino)-2-deoxy-alpha-D-glucopyranoside. N304 to R309 provides a ligand contact to acetyl-CoA.

The protein belongs to the acetyltransferase family. MshD subfamily. Monomer.

The enzyme catalyses 1D-myo-inositol 2-(L-cysteinylamino)-2-deoxy-alpha-D-glucopyranoside + acetyl-CoA = mycothiol + CoA + H(+). Its function is as follows. Catalyzes the transfer of acetyl from acetyl-CoA to desacetylmycothiol (Cys-GlcN-Ins) to form mycothiol. The chain is Mycothiol acetyltransferase from Brachybacterium faecium (strain ATCC 43885 / DSM 4810 / JCM 11609 / LMG 19847 / NBRC 14762 / NCIMB 9860 / 6-10).